A 197-amino-acid chain; its full sequence is ATP-dependent Clp protease proteolytic subunit 2 (197 aa).

Catalysis depends on serine 96, which acts as the Nucleophile. Residue histidine 121 is part of the active site.

This sequence belongs to the peptidase S14 family. Fourteen ClpP subunits assemble into 2 heptameric rings which stack back to back to give a disk-like structure with a central cavity, resembling the structure of eukaryotic proteasomes.

The protein resides in the cytoplasm. It catalyses the reaction Hydrolysis of proteins to small peptides in the presence of ATP and magnesium. alpha-casein is the usual test substrate. In the absence of ATP, only oligopeptides shorter than five residues are hydrolyzed (such as succinyl-Leu-Tyr-|-NHMec, and Leu-Tyr-Leu-|-Tyr-Trp, in which cleavage of the -Tyr-|-Leu- and -Tyr-|-Trp bonds also occurs).. Functionally, cleaves peptides in various proteins in a process that requires ATP hydrolysis. Has a chymotrypsin-like activity. Plays a major role in the degradation of misfolded proteins. The protein is ATP-dependent Clp protease proteolytic subunit 2 of Parasynechococcus marenigrum (strain WH8102).